The chain runs to 162 residues: NADH-ubiquinone oxidoreductase 24 kDa subunit homolog C11E3.12, mitochondrial (162 aa).

C88, C93, C125, and C129 together coordinate [2Fe-2S] cluster.

It belongs to the complex I 24 kDa subunit family. It depends on [2Fe-2S] cluster as a cofactor.

Its subcellular location is the mitochondrion. This Schizosaccharomyces pombe (strain 972 / ATCC 24843) (Fission yeast) protein is NADH-ubiquinone oxidoreductase 24 kDa subunit homolog C11E3.12, mitochondrial.